The chain runs to 512 residues: Glutathione-binding protein GsiB (512 aa).

The N-terminal stretch at 1–26 (MARAVHRSGLVALGIATALMASCAFA) is a signal peptide.

It belongs to the bacterial solute-binding protein 5 family. The complex is composed of two ATP-binding proteins (GsiA), two transmembrane proteins (GsiC and GsiD) and a solute-binding protein (GsiB).

It localises to the periplasm. Its function is as follows. Part of the ABC transporter complex GsiABCD involved in glutathione import. Binds glutathione. This is Glutathione-binding protein GsiB from Shigella flexneri.